Here is a 285-residue protein sequence, read N- to C-terminus: Phosphatidylglycerol--prolipoprotein diacylglyceryl transferase (285 aa).

The next 5 helical transmembrane spans lie at 17-37 (ALGLSPIAFDLGVWHLFGLTL), 43-63 (WYALAYITGILLAWRYVLFLL), 78-98 (LVFWSTLGILVGGRLAYVLFY), 113-133 (WEGGMSYHGGMIGVFLAIWWV), and 139-159 (LSWLRIADYIGCAAPIGLFLG). Arginine 160 provides a ligand contact to a 1,2-diacyl-sn-glycero-3-phospho-(1'-sn-glycerol). 3 consecutive transmembrane segments (helical) span residues 195-215 (LYEAGLEGILLFAFLNYQFFA), 223-243 (GKLAGFFLVGYGLSRFIVEWF), and 256-276 (GLTMGQTLTIPMVIAGLWLII).

The protein belongs to the Lgt family.

It is found in the cell inner membrane. The enzyme catalyses L-cysteinyl-[prolipoprotein] + a 1,2-diacyl-sn-glycero-3-phospho-(1'-sn-glycerol) = an S-1,2-diacyl-sn-glyceryl-L-cysteinyl-[prolipoprotein] + sn-glycerol 1-phosphate + H(+). The protein operates within protein modification; lipoprotein biosynthesis (diacylglyceryl transfer). Catalyzes the transfer of the diacylglyceryl group from phosphatidylglycerol to the sulfhydryl group of the N-terminal cysteine of a prolipoprotein, the first step in the formation of mature lipoproteins. The protein is Phosphatidylglycerol--prolipoprotein diacylglyceryl transferase of Zymomonas mobilis subsp. mobilis (strain ATCC 31821 / ZM4 / CP4).